The sequence spans 239 residues: MIELDQTNIPKHVAIIMDGNGRWAKQKNKMRIFGHTNGVTAVRKAVAYARQIGVEVLTLYAFSSENWSRPEQEISALMSLFMQALDREVKKLHKNNICLKIIGDVSRFSETLQEKIKKAENLTEKNTALTLNIAANYGGCWDIIQAAKQIAEKVKKEEMSVSDINNSTFQHHLATQNAPPVDLLIRTSGEQRISNFLLWQIAYAELYFSDVLWPDFNQLEFNRAIASYQQRHRRFGGTE.

Asp-18 is a catalytic residue. Asp-18 lines the Mg(2+) pocket. Residues 19–22 (GNGR), Trp-23, Arg-31, His-35, and 63–65 (SSE) each bind substrate. Catalysis depends on Asn-66, which acts as the Proton acceptor. Substrate-binding positions include Trp-67, Arg-69, Arg-186, and 192–194 (RIS). Glu-205 lines the Mg(2+) pocket.

Belongs to the UPP synthase family. Homodimer. Mg(2+) is required as a cofactor.

The enzyme catalyses 8 isopentenyl diphosphate + (2E,6E)-farnesyl diphosphate = di-trans,octa-cis-undecaprenyl diphosphate + 8 diphosphate. Its function is as follows. Catalyzes the sequential condensation of isopentenyl diphosphate (IPP) with (2E,6E)-farnesyl diphosphate (E,E-FPP) to yield (2Z,6Z,10Z,14Z,18Z,22Z,26Z,30Z,34E,38E)-undecaprenyl diphosphate (di-trans,octa-cis-UPP). UPP is the precursor of glycosyl carrier lipid in the biosynthesis of bacterial cell wall polysaccharide components such as peptidoglycan and lipopolysaccharide. The polypeptide is Ditrans,polycis-undecaprenyl-diphosphate synthase ((2E,6E)-farnesyl-diphosphate specific) (Haemophilus influenzae (strain ATCC 51907 / DSM 11121 / KW20 / Rd)).